Here is a 66-residue protein sequence, read N- to C-terminus: DNA-directed RNA polymerase subunit Rpo10 (66 aa).

C7, C10, C44, and C45 together coordinate Zn(2+).

Belongs to the archaeal Rpo10/eukaryotic RPB10 RNA polymerase subunit family. In terms of assembly, part of the RNA polymerase complex. The cofactor is Zn(2+).

The protein localises to the cytoplasm. It carries out the reaction RNA(n) + a ribonucleoside 5'-triphosphate = RNA(n+1) + diphosphate. Functionally, DNA-dependent RNA polymerase (RNAP) catalyzes the transcription of DNA into RNA using the four ribonucleoside triphosphates as substrates. This chain is DNA-directed RNA polymerase subunit Rpo10, found in Pyrobaculum neutrophilum (strain DSM 2338 / JCM 9278 / NBRC 100436 / V24Sta) (Thermoproteus neutrophilus).